Here is a 50-residue protein sequence, read N- to C-terminus: Defensin D2 (50 aa).

Cystine bridges form between Cys-3/Cys-50, Cys-14/Cys-35, Cys-20/Cys-44, and Cys-24/Cys-46.

In terms of processing, contains 4 disulfide bonds.

The protein resides in the secreted. Functionally, antimicrobial peptide active against fungi, Gram-positive and Gram-negative bacteria. Inhibits growth of hyphae in the fungi A.niger (IC(50)=3.5 ug/ml), B.sorokiniana (IC(50)=1.8 ug/ml), F.oxysporum (IC(50)=5.3 ug/ml), F.graminearum (IC(50)=6.9 ug/ml), F.culmorum (IC(50)=6.9 ug/ml) and B.cinerea (IC(50)=13.7 ug/ml). Has no effect on spore germination. Destroys spores in germinated conidia by disruption of cell walls and membranes in A.niger and B.sorokiniana. Causes vacuolization of germinated macro- and microconidia in F.oxysporum, F.graminearum and F.culmorum. Strongly inhibits growth of P.infestans on potato tubers above concentrations of 3.4 ug/ml. Inhibits growth of Gram-positive bacteria C.michiganensis and B.subtilis and of Gram-negative bacteria P.syringae, E.carotovora and E.coli. The sequence is that of Defensin D2 from Nigella sativa (Black cumin).